Reading from the N-terminus, the 200-residue chain is MTSKIFSPKISAVIESLRKLPTIGKKSSQRLALYLLDKSPETARAIANSLLDATANIKKCVYCQALTEDDVCNICSNTNRDDTKLCIIESMLDMIAIEEAGIYRGKYFVLNGRISPLDGVGPSELKLDILQRIIADRKIDEVILAISPTVEGETTAHFISQMIAKDIKISRIGFGVPFGGELEYLDQQTLLHAFNARTNI.

Residues 60 to 75 (CVYCQALTEDDVCNIC) form a C4-type zinc finger. A Toprim domain is found at 83 to 177 (TKLCIIESML…KISRIGFGVP (95 aa)).

The protein belongs to the RecR family.

May play a role in DNA repair. It seems to be involved in an RecBC-independent recombinational process of DNA repair. It may act with RecF and RecO. The polypeptide is Recombination protein RecR (Francisella tularensis subsp. novicida (strain U112)).